The following is a 166-amino-acid chain: Cytochrome b (166 aa).

Helical transmembrane passes span 15–35 (FKDI…VLIN), 77–97 (LGGV…PFYN), 109–129 (INQI…WIGA), and 136–156 (YVLL…INPL).

This sequence belongs to the cytochrome b family. As to quaternary structure, the main subunits of complex b-c1 are: cytochrome b, cytochrome c1 and the Rieske protein. Requires heme as cofactor.

The protein localises to the mitochondrion inner membrane. Functionally, component of the ubiquinol-cytochrome c reductase complex (complex III or cytochrome b-c1 complex) that is part of the mitochondrial respiratory chain. The b-c1 complex mediates electron transfer from ubiquinol to cytochrome c. Contributes to the generation of a proton gradient across the mitochondrial membrane that is then used for ATP synthesis. This Drosophila subobscura (Fruit fly) protein is Cytochrome b (mt:Cyt-b).